A 258-amino-acid chain; its full sequence is Tryptophan synthase alpha chain (258 aa).

Residues Glu46 and Asp57 each act as proton acceptor in the active site.

It belongs to the TrpA family. As to quaternary structure, tetramer of two alpha and two beta chains.

The enzyme catalyses (1S,2R)-1-C-(indol-3-yl)glycerol 3-phosphate + L-serine = D-glyceraldehyde 3-phosphate + L-tryptophan + H2O. The protein operates within amino-acid biosynthesis; L-tryptophan biosynthesis; L-tryptophan from chorismate: step 5/5. Its function is as follows. The alpha subunit is responsible for the aldol cleavage of indoleglycerol phosphate to indole and glyceraldehyde 3-phosphate. This Phocaeicola vulgatus (strain ATCC 8482 / DSM 1447 / JCM 5826 / CCUG 4940 / NBRC 14291 / NCTC 11154) (Bacteroides vulgatus) protein is Tryptophan synthase alpha chain.